The following is a 161-amino-acid chain: DNA endonuclease I-CvuI (161 aa).

This sequence belongs to the LAGLIDADG endonuclease family.

It is found in the plastid. The protein localises to the chloroplast. Functionally, probable endonuclease involved in intron homing. The protein is DNA endonuclease I-CvuI of Chlorella vulgaris (Green alga).